We begin with the raw amino-acid sequence, 467 residues long: Nuclear pore complex protein Nup50 (467 aa).

A compositionally biased stretch (basic and acidic residues) spans 1-14 (MAKRVAEKELTDRN). The disordered stretch occupies residues 1-20 (MAKRVAEKELTDRNWDEEDE). At lysine 8 the chain carries N6-acetyllysine. Residue serine 52 is modified to Phosphoserine. Copy 1 of the repeat occupies 76–77 (FG). The segment at 76–303 (FGGGSGGKPL…FSPGNSSLFG (228 aa)) is 5 X 2 AA repeats of F-G. Lysine 83 carries the N6-acetyllysine modification. The segment at 84–103 (PLEGLTNGNSTDSATPFSSA) is disordered. Residues 89–103 (TNGNSTDSATPFSSA) are compositionally biased toward polar residues. The stretch at 113 to 114 (FG) is repeat 2. The residue at position 127 (lysine 127) is an N6-acetyllysine. Disordered regions lie at residues 129-151 (ISSPKCNSSNQPPSSGPASSTSC) and 201-248 (LENG…EDTS). Polar residues predominate over residues 132–151 (PKCNSSNQPPSSGPASSTSC). Positions 144–206 (GPASSTSCTG…IEKQLENGGS (63 aa)) are binding to CDKN1B. Position 209 is a phosphoserine (serine 209). Residues 226-227 (FG) form repeat 3. Positions 226-236 (FGSTKLQQDSP) are enriched in polar residues. Serine 235 carries the post-translational modification Phosphoserine. Threonine 247 is subject to Phosphothreonine. Position 269 is a phosphoserine (serine 269). The stretch at 272 to 273 (FG) is repeat 4. Position 295 is a phosphoserine (serine 295). Repeat 5 spans residues 302–303 (FG). A compositionally biased stretch (low complexity) spans 313–330 (SSPFSAKASESQAGGSSS). The interval 313–348 (SSPFSAKASESQAGGSSSECRDGEEEESDEPPKVVV) is disordered. The 134-residue stretch at 334–467 (DGEEEESDEP…HKILLQKKDV (134 aa)) folds into the RanBD1 domain. Residue lysine 352 forms a Glycyl lysine isopeptide (Lys-Gly) (interchain with G-Cter in SUMO2) linkage. Lysine 449 bears the N6-acetyllysine mark.

As to quaternary structure, does not interact with TPR. Interacts with Importin alpha-2, Importin beta, Importin beta-2, NUP153, Ran binding protein 7, CDKN1B and itself. Highly expressed in testis, intermediate levels in kidney, liver, spleen and low basal levels in somatic cells. Expression in testis undergoes changes and subcellular localization during germ cell differentiation.

It localises to the nucleus. The protein resides in the nuclear pore complex. Its subcellular location is the nucleus membrane. Its function is as follows. Component of the nuclear pore complex that has a direct role in nuclear protein import. Actively displaces NLSs from importin-alpha, and facilitates disassembly of the importin-alpha:beta-cargo complex and importin recycling. Interacts with regulatory proteins of cell cycle progression including CDKN1B. This interaction is required for correct intracellular transport and degradation of CDKN1B. In Rattus norvegicus (Rat), this protein is Nuclear pore complex protein Nup50 (Nup50).